A 101-amino-acid chain; its full sequence is Stefin-C (101 aa).

An N-acetylmethionine modification is found at Met1. The Secondary area of contact signature appears at 49-53 (QVVAG).

The protein belongs to the cystatin family.

It is found in the cytoplasm. Strong inhibitor of papain and cathepsin L but poor inhibitor of cathepsin B. This chain is Stefin-C, found in Bos taurus (Bovine).